Here is a 292-residue protein sequence, read N- to C-terminus: Ribosomal protein L11 methyltransferase (292 aa).

4 residues coordinate S-adenosyl-L-methionine: threonine 144, glycine 165, aspartate 187, and asparagine 229.

This sequence belongs to the methyltransferase superfamily. PrmA family.

It localises to the cytoplasm. The catalysed reaction is L-lysyl-[protein] + 3 S-adenosyl-L-methionine = N(6),N(6),N(6)-trimethyl-L-lysyl-[protein] + 3 S-adenosyl-L-homocysteine + 3 H(+). Its function is as follows. Methylates ribosomal protein L11. This chain is Ribosomal protein L11 methyltransferase, found in Pseudomonas fluorescens (strain Pf0-1).